We begin with the raw amino-acid sequence, 118 residues long: UPF0102 protein RSal33209_1090 (118 aa).

This sequence belongs to the UPF0102 family.

This chain is UPF0102 protein RSal33209_1090, found in Renibacterium salmoninarum (strain ATCC 33209 / DSM 20767 / JCM 11484 / NBRC 15589 / NCIMB 2235).